Reading from the N-terminus, the 684-residue chain is Soluble guanylate cyclase gcy-32 (684 aa).

H105 is a binding site for heme. The stretch at 396 to 432 (DVEVNLQLEANNEQLETMTRELELERQKTDSILKDML) forms a coiled coil. One can recognise a Guanylate cyclase domain in the interval 454–582 (TVMFCDLPAF…ETVTLASQME (129 aa)). Positions 459 and 503 each coordinate Mg(2+).

It belongs to the adenylyl cyclase class-4/guanylyl cyclase family. As to quaternary structure, heterodimer; with other soluble guanylate cyclases. Requires heme as cofactor. As to expression, expressed in a small number of neurons, corresponding to URX, AQR and PQR neurons.

It localises to the cytoplasm. It catalyses the reaction GTP = 3',5'-cyclic GMP + diphosphate. Its activity is regulated as follows. May be regulated by molecular oxygen. Probably not activated by nitric oxide (NO). Its function is as follows. Synthesizes cyclic GMP (cGMP) from GTP. Influences aerotaxis responses, aggregation and bordering behaviors (gathering around the edge of a bacterial lawn) in combination with other soluble guanylate cyclases. This is Soluble guanylate cyclase gcy-32 (gcy-32) from Caenorhabditis elegans.